A 564-amino-acid chain; its full sequence is uncharacterized protein (564 aa).

8 helical membrane passes run 12-32 (TYYLWIALFLLLLYVSPLFIL), 97-119 (MTAYAISQTVTRVVAFFGMYVLL), 139-161 (AFALTPFWPSGMLSTLGYPLALW), 188-208 (FVLGFFFFLAGMACFWLYDAI), 213-233 (WNLMFLGSIAFMTSIYLFVEY), 277-297 (MTVHTVVILPILMVVFAALLF), 306-326 (NVYLFLCVLNYGLSLWYAFWF), and 348-368 (FHFLRPLVIYVSFALALYLIW).

The protein resides in the cell membrane. This is an uncharacterized protein from Bacillus subtilis (strain 168).